We begin with the raw amino-acid sequence, 71 residues long: Large ribosomal subunit protein bL31 (71 aa).

The Zn(2+) site is built by Cys-16, Cys-18, Cys-37, and Cys-40.

This sequence belongs to the bacterial ribosomal protein bL31 family. Type A subfamily. In terms of assembly, part of the 50S ribosomal subunit. The cofactor is Zn(2+).

In terms of biological role, binds the 23S rRNA. The sequence is that of Large ribosomal subunit protein bL31 from Aeromonas salmonicida (strain A449).